A 188-amino-acid polypeptide reads, in one-letter code: Peptide deformylase (188 aa).

The Fe cation site is built by Cys94 and His136. Glu137 is a catalytic residue. His140 contacts Fe cation.

Belongs to the polypeptide deformylase family. The cofactor is Fe(2+).

The enzyme catalyses N-terminal N-formyl-L-methionyl-[peptide] + H2O = N-terminal L-methionyl-[peptide] + formate. Its function is as follows. Removes the formyl group from the N-terminal Met of newly synthesized proteins. Requires at least a dipeptide for an efficient rate of reaction. N-terminal L-methionine is a prerequisite for activity but the enzyme has broad specificity at other positions. This chain is Peptide deformylase, found in Pelodictyon phaeoclathratiforme (strain DSM 5477 / BU-1).